A 160-amino-acid chain; its full sequence is Protein-export protein SecB (160 aa).

This sequence belongs to the SecB family. Homotetramer, a dimer of dimers. One homotetramer interacts with 1 SecA dimer.

The protein localises to the cytoplasm. Its function is as follows. One of the proteins required for the normal export of preproteins out of the cell cytoplasm. It is a molecular chaperone that binds to a subset of precursor proteins, maintaining them in a translocation-competent state. It also specifically binds to its receptor SecA. The sequence is that of Protein-export protein SecB from Nitrosomonas eutropha (strain DSM 101675 / C91 / Nm57).